Reading from the N-terminus, the 69-residue chain is Putative membrane protein insertion efficiency factor (69 aa).

It belongs to the UPF0161 family.

It localises to the cell membrane. Its function is as follows. Could be involved in insertion of integral membrane proteins into the membrane. This Caldanaerobacter subterraneus subsp. tengcongensis (strain DSM 15242 / JCM 11007 / NBRC 100824 / MB4) (Thermoanaerobacter tengcongensis) protein is Putative membrane protein insertion efficiency factor.